A 454-amino-acid chain; its full sequence is Serine/threonine-protein kinase NLK2 (454 aa).

A Protein kinase domain is found at 67-356 (PEPDRPIGYG…AKDALAHPYL (290 aa)). ATP-binding positions include 73–81 (IGYGAFGVV) and Lys96. Asp193 (proton acceptor) is an active-site residue.

It belongs to the protein kinase superfamily. CMGC Ser/Thr protein kinase family. MAP kinase subfamily. As to quaternary structure, interacts with sox11, hmgxb4/hmg2l1, rnf138/narf, stat3.1 and mef2a. Mg(2+) serves as cofactor.

The protein localises to the nucleus. Its subcellular location is the cytoplasm. The catalysed reaction is L-seryl-[protein] + ATP = O-phospho-L-seryl-[protein] + ADP + H(+). It catalyses the reaction L-threonyl-[protein] + ATP = O-phospho-L-threonyl-[protein] + ADP + H(+). Its activity is regulated as follows. Activated by tyrosine and threonine phosphorylation. Negatively regulates Wnt/beta-catenin-signaling during development. Plays a role together with sox11 in neural induction during early embryogenesis. Involved in TGFbeta-mediated mesoderm induction in early embryos, acting downstream of map3k7/tak1 to phosphorylate stat3. Augments the rnf138/narf-directed ubiquitination and degradation of tcf/lef by enhancing the association of rnf138/narf and tcf/lef. Phosphorylates mef2a to play a role in anterior neural development, including eye formation. The sequence is that of Serine/threonine-protein kinase NLK2 (nlk.2) from Xenopus tropicalis (Western clawed frog).